The primary structure comprises 804 residues: G-type lectin S-receptor-like serine/threonine-protein kinase LECRK4 (804 aa).

A signal peptide spans 1–23 (MAPPLFLLSLQLLVLLSSPSAQA). A Bulb-type lectin domain is found at 24 to 150 (QNISLGTSLT…GGSTISWETF (127 aa)). Over 24–458 (QNISLGTSLT…DKKLWILGSS (435 aa)) the chain is Extracellular. N-linked (GlcNAc...) asparagine glycosylation is found at N25, N58, N216, N227, N238, and N243. In terms of domain architecture, EGF-like; atypical spans 290-341 (PENICNAQTKVGSGTCGFNSYCMFDGSNNQTSCVCPEQYSFFDEVRKYRGCR). Disulfide bonds link C294–C311, C305–C322, C324–C340, C386–C406, and C390–C396. The N-linked (GlcNAc...) asparagine glycan is linked to N318. The PAN domain maps to 349-426 (CDLDEAASMA…IMGSGVQRTV (78 aa)). A glycan (N-linked (GlcNAc...) asparagine) is linked at N434. Residues 459–479 (LLLGGSVIANFALSSVLLFGT) form a helical membrane-spanning segment. Residues 480-804 (YCTITRKDVQ…DSSSVVNSFP (325 aa)) lie on the Cytoplasmic side of the membrane. The region spanning 514–790 (DGFKEVLGTG…TQMLDGADAI (277 aa)) is the Protein kinase domain. Residues 520–528 (LGTGASGIV) and K544 contribute to the ATP site. D638 acts as the Proton acceptor in catalysis.

It belongs to the protein kinase superfamily. Ser/Thr protein kinase family.

Its subcellular location is the membrane. It catalyses the reaction L-seryl-[protein] + ATP = O-phospho-L-seryl-[protein] + ADP + H(+). The enzyme catalyses L-threonyl-[protein] + ATP = O-phospho-L-threonyl-[protein] + ADP + H(+). Does not seem to be involved in resistance against the herbivorous insect brown planthopper (N.lugens, BPH). In Oryza sativa subsp. indica (Rice), this protein is G-type lectin S-receptor-like serine/threonine-protein kinase LECRK4.